The sequence spans 396 residues: 1-deoxy-D-xylulose 5-phosphate reductoisomerase (396 aa).

Positions 10, 11, 12, 13, and 123 each coordinate NADPH. Position 124 (Lys124) interacts with 1-deoxy-D-xylulose 5-phosphate. Glu125 is an NADPH binding site. Asp149 is a Mn(2+) binding site. 4 residues coordinate 1-deoxy-D-xylulose 5-phosphate: Ser150, Glu151, Ser185, and His208. Residue Glu151 participates in Mn(2+) binding. Gly214 is a binding site for NADPH. Ser221, Asn226, Lys227, and Glu230 together coordinate 1-deoxy-D-xylulose 5-phosphate. Glu230 provides a ligand contact to Mn(2+).

The protein belongs to the DXR family. The cofactor is Mg(2+). It depends on Mn(2+) as a cofactor.

It catalyses the reaction 2-C-methyl-D-erythritol 4-phosphate + NADP(+) = 1-deoxy-D-xylulose 5-phosphate + NADPH + H(+). Its pathway is isoprenoid biosynthesis; isopentenyl diphosphate biosynthesis via DXP pathway; isopentenyl diphosphate from 1-deoxy-D-xylulose 5-phosphate: step 1/6. Its function is as follows. Catalyzes the NADPH-dependent rearrangement and reduction of 1-deoxy-D-xylulose-5-phosphate (DXP) to 2-C-methyl-D-erythritol 4-phosphate (MEP). The protein is 1-deoxy-D-xylulose 5-phosphate reductoisomerase of Shewanella frigidimarina (strain NCIMB 400).